Consider the following 267-residue polypeptide: 4-hydroxy-tetrahydrodipicolinate reductase (267 aa).

NAD(+) contacts are provided by residues 8-13 (GAAGRM) and E34. Position 35 (R35) interacts with NADP(+). Residues 98 to 100 (GST) and 122 to 125 (APNM) each bind NAD(+). The active-site Proton donor/acceptor is the H155. Residue H156 participates in (S)-2,3,4,5-tetrahydrodipicolinate binding. Residue K159 is the Proton donor of the active site. 165-166 (GT) is a binding site for (S)-2,3,4,5-tetrahydrodipicolinate.

Belongs to the DapB family.

The protein resides in the cytoplasm. It catalyses the reaction (S)-2,3,4,5-tetrahydrodipicolinate + NAD(+) + H2O = (2S,4S)-4-hydroxy-2,3,4,5-tetrahydrodipicolinate + NADH + H(+). The catalysed reaction is (S)-2,3,4,5-tetrahydrodipicolinate + NADP(+) + H2O = (2S,4S)-4-hydroxy-2,3,4,5-tetrahydrodipicolinate + NADPH + H(+). It functions in the pathway amino-acid biosynthesis; L-lysine biosynthesis via DAP pathway; (S)-tetrahydrodipicolinate from L-aspartate: step 4/4. Functionally, catalyzes the conversion of 4-hydroxy-tetrahydrodipicolinate (HTPA) to tetrahydrodipicolinate. The polypeptide is 4-hydroxy-tetrahydrodipicolinate reductase (Geobacter sp. (strain M21)).